The following is a 157-amino-acid chain: Protein-export protein SecB (157 aa).

Belongs to the SecB family. Homotetramer, a dimer of dimers. One homotetramer interacts with 1 SecA dimer.

It localises to the cytoplasm. One of the proteins required for the normal export of preproteins out of the cell cytoplasm. It is a molecular chaperone that binds to a subset of precursor proteins, maintaining them in a translocation-competent state. It also specifically binds to its receptor SecA. The polypeptide is Protein-export protein SecB (Magnetococcus marinus (strain ATCC BAA-1437 / JCM 17883 / MC-1)).